The following is a 404-amino-acid chain: Phosphoglycerate kinase (404 aa).

Residues 22–24 (DFN), R37, 60–63 (HLGR), R120, and R160 contribute to the substrate site. ATP is bound by residues K215, E333, and 360-363 (GGDS).

This sequence belongs to the phosphoglycerate kinase family. As to quaternary structure, monomer.

The protein resides in the cytoplasm. The enzyme catalyses (2R)-3-phosphoglycerate + ATP = (2R)-3-phospho-glyceroyl phosphate + ADP. It functions in the pathway carbohydrate degradation; glycolysis; pyruvate from D-glyceraldehyde 3-phosphate: step 2/5. The sequence is that of Phosphoglycerate kinase from Latilactobacillus sakei subsp. sakei (strain 23K) (Lactobacillus sakei subsp. sakei).